A 264-amino-acid polypeptide reads, in one-letter code: SPRY domain-containing SOCS box protein 2 (264 aa).

Polar residues predominate over residues 1–19; sequence MGQTALARGSSSTPTSQAL. A disordered region spans residues 1–34; the sequence is MGQTALARGSSSTPTSQALYSDFSPPEGLEELLS. A B30.2/SPRY domain is found at 26-221; it reads PEGLEELLSA…VRIRYMGERR (196 aa). In terms of domain architecture, SOCS box spans 222-264; the sequence is VEEPQSLLHLSRLCVRHALGDTRLGQISTLPLPPAMKRYLLYK.

The protein belongs to the SPSB family. Component of the probable ECS(SPSB2) E3 ubiquitin-protein ligase complex which contains CUL5, RNF7/RBX2, Elongin BC complex and SPSB2. Interacts with CUL5, RNF7, ELOB and ELOC. Interacts with MET. Interacts (via B30.2/SPRY domain) with PAWR; this interaction occurs in association with the Elongin BC complex. Interacts with NOS2.

The protein localises to the cytoplasm. The protein resides in the cytosol. It participates in protein modification; protein ubiquitination. Substrate recognition component of a SCF-like ECS (Elongin BC-CUL2/5-SOCS-box protein) E3 ubiquitin-protein ligase complex which mediates the ubiquitination and subsequent proteasomal degradation of target proteins. Negatively regulates nitric oxide (NO) production and limits cellular toxicity in activated macrophages by mediating the ubiquitination and proteasomal degradation of NOS2. Acts as a bridge which links NOS2 with the ECS E3 ubiquitin ligase complex components ELOC and CUL5. The chain is SPRY domain-containing SOCS box protein 2 (Spsb2) from Mus musculus (Mouse).